We begin with the raw amino-acid sequence, 226 residues long: Large ribosomal subunit protein uL3 (226 aa).

This sequence belongs to the universal ribosomal protein uL3 family. Part of the 50S ribosomal subunit. Forms a cluster with proteins L14 and L19.

Its function is as follows. One of the primary rRNA binding proteins, it binds directly near the 3'-end of the 23S rRNA, where it nucleates assembly of the 50S subunit. The chain is Large ribosomal subunit protein uL3 from Sulfurihydrogenibium sp. (strain YO3AOP1).